The chain runs to 163 residues: Probable ribosome biogenesis protein RLP24 (163 aa).

The protein belongs to the eukaryotic ribosomal protein eL24 family. Associated with nucleolar and cytoplasmic pre-60S particles. At the end of biogenesis it dissociates from cytoplasmic pre-60S particles and is likely to be exchanged for its ribosomal homolog, RPL24.

The protein localises to the nucleus. Its subcellular location is the nucleolus. Functionally, involved in the biogenesis of the 60S ribosomal subunit. Ensures the docking of GTPBP4/NOG1 to pre-60S particles. This is Probable ribosome biogenesis protein RLP24 (Rsl24d1) from Rattus norvegicus (Rat).